We begin with the raw amino-acid sequence, 176 residues long: Probable inosine/xanthosine triphosphatase (176 aa).

Aspartate 36 contributes to the Mg(2+) binding site.

This sequence belongs to the YjjX NTPase family. In terms of assembly, homodimer. It depends on Mg(2+) as a cofactor. The cofactor is Mn(2+).

It carries out the reaction XTP + H2O = XDP + phosphate + H(+). The enzyme catalyses ITP + H2O = IDP + phosphate + H(+). Phosphatase that hydrolyzes non-canonical purine nucleotides such as XTP and ITP to their respective diphosphate derivatives. Probably excludes non-canonical purines from DNA/RNA precursor pool, thus preventing their incorporation into DNA/RNA and avoiding chromosomal lesions. This chain is Probable inosine/xanthosine triphosphatase, found in Saccharolobus islandicus (strain Y.G.57.14 / Yellowstone #1) (Sulfolobus islandicus).